The chain runs to 240 residues: Fibronectin type III domain-containing protein 5 (240 aa).

Residues 1–10 (MQAARGGAGR) are compositionally biased toward gly residues. Residues 1 to 33 (MQAARGGAGRPGREGRGLERECERSPGPGVAMP) are disordered. A compositionally biased stretch (basic and acidic residues) spans 11-24 (PGREGRGLERECER). In terms of domain architecture, Fibronectin type-III spans 64-155 (APVNVTVRHL…EPVLFKTPRE (92 aa)). Residues Asn67 and Asn112 are each glycosylated (N-linked (GlcNAc...) asparagine). Residues 181-201 (GEVLIIVVVLFMWAGVIALFC) traverse the membrane as a helical segment. The segment covering 210–221 (NEPNNNKEKTKS) has biased composition (basic and acidic residues). The segment at 210-240 (NEPNNNKEKTKSASETSTPEHQGGGLLRSKI) is disordered. Over residues 231 to 240 (QGGGLLRSKI) the composition is skewed to gly residues. The Microbody targeting signal signature appears at 238 to 240 (SKI).

Dimer; may exist in other oligomeric forms. Post-translationally, the extracellular domain is cleaved and released from the cell membrane. N-Glycosylated. In adult, it is highly expressed in skeletal muscle, heart and brain.

The protein localises to the cell membrane. Its subcellular location is the peroxisome membrane. It is found in the secreted. In terms of biological role, mediates beneficial effects of muscular exercise. Induces browning of white adipose tissue by stimulating UCP1 expression, at least in part, via the nuclear receptor PPARA. This chain is Fibronectin type III domain-containing protein 5 (Fndc5), found in Mus musculus (Mouse).